A 344-amino-acid chain; its full sequence is Protein YIPF3 (344 aa).

Residues 1–12 (MSASQGSKNTNA) show a composition bias toward polar residues. The tract at residues 1–24 (MSASQGSKNTNAEPWGGFDDNIIQ) is disordered. At 1–146 (MSASQGSKNT…PVRMINFPQK (146 aa)) the chain is on the cytoplasmic side. Residues 147 to 167 (VAGELYGPMMLVFTLVAILLH) form a helical membrane-spanning segment. Residues 168–185 (GMKTSGTVIREGTLMGTA) are Lumenal-facing. A helical membrane pass occupies residues 186-206 (IGTGFGYWLGVSSFIYFLAYL). Residues 207-212 (CNAQIT) lie on the Cytoplasmic side of the membrane. Residues 213 to 233 (MLQMLSLLGYGLFGHCVVLFI) traverse the membrane as a helical segment. Residues 234-242 (TYNVHFHSL) lie on the Lumenal side of the membrane. A helical membrane pass occupies residues 243-263 (FYLLWMVIGGLSTLRMVAVLI). At 264–272 (SRTVGQTPR) the chain is on the cytoplasmic side. The helical transmembrane segment at 273–293 (LILCGSLAALHMLFLLYLHFA) threads the bilayer. Residues 294–344 (YHKMVEGILDTLEGPNIPPIQRVARDVPVVASAVVNATVKSIAAIVQSQQL) lie on the Lumenal side of the membrane. Asn329 carries N-linked (GlcNAc...) asparagine glycosylation.

The protein belongs to the YIP1 family.

The protein localises to the cell membrane. It is found in the golgi apparatus. Its subcellular location is the cis-Golgi network membrane. It localises to the cytoplasm. Functionally, involved in the maintenance of the Golgi structure. May play a role in hematopoiesis. The polypeptide is Protein YIPF3 (yipf3) (Danio rerio (Zebrafish)).